Reading from the N-terminus, the 204-residue chain is MKTEDFDFEKKRKIFHISAIIFPMFYLFVPRIAIALLLFIITSITLYLDVIRHNNAKIRKFVTRFFSKIIRLKENNGTFALSGISFMMLGFFLTSILFPKNLVICSWLILIISDCLAALVGIKIGSSLSNGKSIAGSFTFFVSALFISILVYFYLGYNTSFVIIIISCIGATAVEFYSKYLRINDNLSIPLSYCLSTTIFPYIL.

This is an uncharacterized protein from Rickettsia prowazekii (strain Madrid E).